A 169-amino-acid polypeptide reads, in one-letter code: Large ribosomal subunit protein uL5 (169 aa).

This sequence belongs to the universal ribosomal protein uL5 family. Part of the 50S ribosomal subunit; contacts the 5S rRNA and probably tRNA. Forms a bridge to the 30S subunit in the 70S ribosome.

This is one of the proteins that bind and probably mediate the attachment of the 5S RNA into the large ribosomal subunit, where it forms part of the central protuberance. In the 70S ribosome it contacts protein S13 of the 30S subunit (bridge B1b), connecting the 2 subunits; this bridge is implicated in subunit movement. May contact the P site tRNA; the 5S rRNA and some of its associated proteins might help stabilize positioning of ribosome-bound tRNAs. The chain is Large ribosomal subunit protein uL5 from Methanosarcina barkeri (strain Fusaro / DSM 804).